Here is a 499-residue protein sequence, read N- to C-terminus: Glutamyl-tRNA(Gln) amidotransferase subunit A (499 aa).

Residues lysine 79 and serine 154 each act as charge relay system in the active site. Serine 178 acts as the Acyl-ester intermediate in catalysis.

The protein belongs to the amidase family. GatA subfamily. Heterotrimer of A, B and C subunits.

It catalyses the reaction L-glutamyl-tRNA(Gln) + L-glutamine + ATP + H2O = L-glutaminyl-tRNA(Gln) + L-glutamate + ADP + phosphate + H(+). Its function is as follows. Allows the formation of correctly charged Gln-tRNA(Gln) through the transamidation of misacylated Glu-tRNA(Gln) in organisms which lack glutaminyl-tRNA synthetase. The reaction takes place in the presence of glutamine and ATP through an activated gamma-phospho-Glu-tRNA(Gln). The chain is Glutamyl-tRNA(Gln) amidotransferase subunit A from Psychrobacter sp. (strain PRwf-1).